The following is a 181-amino-acid chain: Thymidine kinase (181 aa).

An ATP-binding site is contributed by 13 to 20 (GPMFSGKS). Glutamate 85 (proton acceptor) is an active-site residue. Phenylalanine 115 provides a ligand contact to substrate. Residues cysteine 140 and cysteine 143 each coordinate Zn(2+). Residue 159–163 (IEIIG) coordinates substrate. Residues cysteine 172 and cysteine 175 each contribute to the Zn(2+) site.

The protein belongs to the thymidine kinase family.

It carries out the reaction thymidine + ATP = dTMP + ADP + H(+). This Yaba monkey tumor virus (strain VR587) (YMTV) protein is Thymidine kinase (TK).